Here is a 469-residue protein sequence, read N- to C-terminus: Pup--protein ligase (469 aa).

E9 provides a ligand contact to Mg(2+). Residue R53 coordinates ATP. Y55 is a binding site for Mg(2+). Residue D57 is the Proton acceptor of the active site. E63 serves as a coordination point for Mg(2+). ATP is bound by residues T66 and W430.

This sequence belongs to the Pup ligase/Pup deamidase family. Pup-conjugating enzyme subfamily.

It carries out the reaction ATP + [prokaryotic ubiquitin-like protein]-L-glutamate + [protein]-L-lysine = ADP + phosphate + N(6)-([prokaryotic ubiquitin-like protein]-gamma-L-glutamyl)-[protein]-L-lysine.. Its pathway is protein degradation; proteasomal Pup-dependent pathway. It functions in the pathway protein modification; protein pupylation. Catalyzes the covalent attachment of the prokaryotic ubiquitin-like protein modifier Pup to the proteasomal substrate proteins, thereby targeting them for proteasomal degradation. This tagging system is termed pupylation. The ligation reaction involves the side-chain carboxylate of the C-terminal glutamate of Pup and the side-chain amino group of a substrate lysine. The sequence is that of Pup--protein ligase from Kocuria rhizophila (strain ATCC 9341 / DSM 348 / NBRC 103217 / DC2201).